The primary structure comprises 225 residues: 2-amino-5-formylamino-6-ribosylaminopyrimidin-4(3H)-one 5'-monophosphate deformylase (225 aa).

Residues E28, H30, D39, and H107 each contribute to the Fe cation site.

It belongs to the creatininase superfamily. FAPy deformylase family. In terms of assembly, homodimer. Requires Fe(2+) as cofactor. It depends on Zn(2+) as a cofactor.

It catalyses the reaction 2-amino-5-formylamino-6-(5-phospho-D-ribosylamino)pyrimidin-4(3H)-one + H2O = 2,5-diamino-6-(1-D-ribosylamino)pyrimidin-4(3H)-one 5'-phosphate + formate + H(+). It functions in the pathway cofactor biosynthesis; coenzyme F420 biosynthesis. It participates in cofactor biosynthesis; riboflavin biosynthesis. Functionally, catalyzes the hydrolysis of the formamide of 2-amino-5-formylamino-6-ribosylamino-4(3H)-pyrimidinone 5'-monophosphate (FAPy) to form 2,5-diamino-6-ribosylamino-4(3H)-pyrimidinone 5'-phosphate (APy). This chain is 2-amino-5-formylamino-6-ribosylaminopyrimidin-4(3H)-one 5'-monophosphate deformylase, found in Methanocaldococcus sp. (strain FS406-22).